The following is a 490-amino-acid chain: Protein nucleotidyltransferase YdiU (490 aa).

ATP is bound by residues glycine 92, glycine 94, arginine 95, lysine 114, aspartate 126, glycine 127, arginine 177, and arginine 184. Aspartate 256 functions as the Proton acceptor in the catalytic mechanism. Positions 257 and 266 each coordinate Mg(2+). ATP is bound at residue aspartate 266.

Belongs to the SELO family. Mg(2+) serves as cofactor. It depends on Mn(2+) as a cofactor.

The catalysed reaction is L-seryl-[protein] + ATP = 3-O-(5'-adenylyl)-L-seryl-[protein] + diphosphate. It carries out the reaction L-threonyl-[protein] + ATP = 3-O-(5'-adenylyl)-L-threonyl-[protein] + diphosphate. The enzyme catalyses L-tyrosyl-[protein] + ATP = O-(5'-adenylyl)-L-tyrosyl-[protein] + diphosphate. It catalyses the reaction L-histidyl-[protein] + UTP = N(tele)-(5'-uridylyl)-L-histidyl-[protein] + diphosphate. The catalysed reaction is L-seryl-[protein] + UTP = O-(5'-uridylyl)-L-seryl-[protein] + diphosphate. It carries out the reaction L-tyrosyl-[protein] + UTP = O-(5'-uridylyl)-L-tyrosyl-[protein] + diphosphate. Functionally, nucleotidyltransferase involved in the post-translational modification of proteins. It can catalyze the addition of adenosine monophosphate (AMP) or uridine monophosphate (UMP) to a protein, resulting in modifications known as AMPylation and UMPylation. In Bordetella avium (strain 197N), this protein is Protein nucleotidyltransferase YdiU.